Here is a 61-residue protein sequence, read N- to C-terminus: Double gene block protein 1 (61 aa).

The interval 15-45 (LAGNRGKQKTRRSVAKDAIRKPASDSTNGGN) is disordered. The tract at residues 17–35 (GNRGKQKTRRSVAKDAIRK) is RNA-binding. Over residues 28–37 (VAKDAIRKPA) the composition is skewed to basic and acidic residues.

The protein belongs to the carmovirus double gene block protein 1 family. As to quaternary structure, homodimer.

In terms of biological role, cell-to-cell movement. Displays RNA-binding activity. In Carnation mottle virus (isolate China/Shanghai) (CarMV), this protein is Double gene block protein 1.